Reading from the N-terminus, the 718-residue chain is Mitotic spindle assembly checkpoint protein MAD1 (718 aa).

Met-1 is modified (N-acetylmethionine). Ser-16 bears the Phosphoserine mark. Residues Gln-46–Ala-632 adopt a coiled-coil conformation. N6-acetyllysine; alternate is present on Lys-61. Residue Lys-61 forms a Glycyl lysine isopeptide (Lys-Gly) (interchain with G-Cter in SUMO2); alternate linkage. The Nuclear localization signal signature appears at Lys-79–Arg-82. Phosphoserine is present on Ser-214. The important for interaction with IK stretch occupies residues Val-301–Glu-340. Positions Leu-380–Gln-532 are necessary for interaction with NEK2. Phosphoserine is present on Ser-428. Residues Glu-439–Leu-480 form an important for interaction with IK region. A necessary for interaction with MAD2L1 region spans residues Thr-540 to Ser-551. Phosphoserine is present on residues Ser-598 and Ser-610. Tyr-634 is modified (phosphotyrosine). Position 716 is a phosphothreonine (Thr-716).

Belongs to the MAD1 family. In terms of assembly, homodimer. Dimerizes via its N- and C- terminal regions. Heterodimerizes with MAD2L1 in order to form a tetrameric MAD1L1-MAD2L1 core complex. Interacts with the closed conformation form of MAD2L1 (C-MAD2) and open conformation form of MAD2L1 (O-MAD2). It is unclear whether MAD1L1 dimerization promotes the conversion of closed to open conformation of MAD2L1. Formation of a heterotetrameric core complex containing two molecules each of MAD1L1 and of MAD2L1 promotes binding of another molecule of MAD2L1 to each MAD2L1, resulting in a heterohexamer. Perturbation of the original MAD1L1-MAD2L1 structure by the spindle checkpoint may decrease MAD2L1 affinity for MAD1L1. CDC20 can compete with MAD1L1 for MAD2L1 binding, until the attachment and/or tension dampen the checkpoint signal, preventing further release of MAD2L1 on to CDC20. Also able to interact with the BUB1/BUB3 complex. Interacts with NEK2. Interacts with TTK. Interacts with TPR; the interactions occurs in a microtubule-independent manner. Interacts with IK. Interacts with the viral Tax protein. Interacts with PRAP1. Interacts with MAD2L1; this interaction leads to the cytoplasmic sequestration of MAD2L1. Interacts with PRAP1. In terms of processing, phosphorylated; by BUB1. Become hyperphosphorylated in late S through M phases or after mitotic spindle damage. Phosphorylated; by TTK. As to expression, expressed in hepatocellular carcinomas and hepatoma cell lines (at protein level).

The protein localises to the nucleus. It is found in the chromosome. It localises to the centromere. The protein resides in the kinetochore. Its subcellular location is the nucleus envelope. The protein localises to the cytoplasm. It is found in the cytoskeleton. It localises to the microtubule organizing center. The protein resides in the centrosome. Its subcellular location is the spindle. The protein localises to the spindle pole. Functionally, component of the spindle-assembly checkpoint that prevents the onset of anaphase until all chromosomes are properly aligned at the metaphase plate. Forms a heterotetrameric complex with the closed conformation form of MAD2L1 (C-MAD2) at unattached kinetochores during prometaphase, recruits an open conformation of MAD2L1 (O-MAD2) and promotes the conversion of O-MAD2 to C-MAD2, which ensures mitotic checkpoint signaling. In terms of biological role, sequesters MAD2L1 in the cytoplasm preventing its function as an activator of the mitotic spindle assembly checkpoint (SAC) resulting in SAC impairment and chromosomal instability in hepatocellular carcinomas. The sequence is that of Mitotic spindle assembly checkpoint protein MAD1 (MAD1L1) from Homo sapiens (Human).